Reading from the N-terminus, the 551-residue chain is Interleukin-2 receptor subunit beta (551 aa).

The first 26 residues, 1–26 (MAAPALSWRLPLLILLLPLATPWASA), serve as a signal peptide directing secretion. Topologically, residues 27–240 (TVNGTSQFTC…TKPASLGKDT (214 aa)) are extracellular. N-linked (GlcNAc...) asparagine glycosylation is found at N29, N43, and N71. C36 and C46 are oxidised to a cystine. A disulfide bridge links C74 with C86. Positions 134–234 (APISLQVVHV…QPLAFRTKPA (101 aa)) constitute a Fibronectin type-III domain. Residue N149 is glycosylated (N-linked (GlcNAc...) asparagine). Positions 220 to 224 (WSPWS) match the WSXWS motif motif. The chain crosses the membrane as a helical span at residues 241–265 (IPWLGHLLVGLSGAFGFIILVYLLI). Topologically, residues 266 to 551 (NCRNTGPWLK…LQGQDPTHLV (286 aa)) are cytoplasmic. The Box 1 motif motif lies at 278–286 (LKCHTPDPS). Disordered regions lie at residues 393 to 412 (DEGVAGAPTGSSPQPLQPLS) and 433 to 476 (SLLG…GPPT).

Belongs to the type I cytokine receptor family. Type 4 subfamily. In terms of assembly, non-covalent dimer of an alpha and a beta subunit. IL2R exists in 3 different forms: a high affinity dimer, an intermediate affinity monomer (beta subunit), and a low affinity monomer (alpha subunit). The high and intermediate affinity forms also associate with a gamma subunit. Interacts with SHB upon interleukin stimulation.

The protein resides in the cell membrane. It localises to the cell surface. Functionally, receptor for interleukin-2. This beta subunit is involved in receptor mediated endocytosis and transduces the mitogenic signals of IL2. Probably in association with IL15RA, involved in the stimulation of neutrophil phagocytosis by IL15. The polypeptide is Interleukin-2 receptor subunit beta (IL2RB) (Pan troglodytes (Chimpanzee)).